Consider the following 822-residue polypeptide: Glycerol-3-phosphate acyltransferase (822 aa).

The short motif at 306–311 is the HXXXXD motif element; it reads CHRSHM. The disordered stretch occupies residues 803–822; sequence ASSSAEMEAESQAVEETTQE.

This sequence belongs to the GPAT/DAPAT family.

The protein resides in the cell inner membrane. The enzyme catalyses sn-glycerol 3-phosphate + an acyl-CoA = a 1-acyl-sn-glycero-3-phosphate + CoA. Its pathway is phospholipid metabolism; CDP-diacylglycerol biosynthesis; CDP-diacylglycerol from sn-glycerol 3-phosphate: step 1/3. The polypeptide is Glycerol-3-phosphate acyltransferase (Pectobacterium carotovorum subsp. carotovorum (strain PC1)).